Here is a 36-residue protein sequence, read N- to C-terminus: Potassium channel toxin alpha-KTx 6.14 (36 aa).

Disulfide bonds link cysteine 5/cysteine 25, cysteine 11/cysteine 30, cysteine 15/cysteine 32, and cysteine 20/cysteine 35.

In terms of tissue distribution, expressed by the venom gland.

The protein localises to the secreted. Blocks Shaker B channels expressed in Sf9 cells, with a dissociation constant of 52 nM. In Hoffmannihadrurus gertschi (Scorpion), this protein is Potassium channel toxin alpha-KTx 6.14.